The following is a 690-amino-acid chain: Protein hook (690 aa).

The region spanning 6–122 (MEIYESLIRW…RLLQLILGCA (117 aa)) is the Calponin-homology (CH) domain. Coiled coils occupy residues 134-515 (QIME…HHAE) and 546-577 (ETTQHQLSNLHTKIANLEAALVVKDQELQAAD).

Belongs to the hook family. As to quaternary structure, homodimer. Interacts with microtubules via its N-terminus.

The protein localises to the cytoplasm. It is found in the cytoskeleton. The protein resides in the endosome. In terms of biological role, involved in endocytic trafficking. Probably acts as a cytoskeletal linker protein that tethers endosome vesicles to the cytoskeleton. The chain is Protein hook from Anopheles gambiae (African malaria mosquito).